Here is a 194-residue protein sequence, read N- to C-terminus: Isopentenyl-diphosphate Delta-isomerase (194 aa).

The Mn(2+) site is built by histidine 35 and histidine 42. One can recognise a Nudix hydrolase domain in the interval 40–174 (PLHLAFSSYL…PWALSPWSVD (135 aa)). Cysteine 77 is a catalytic residue. Histidine 79 is a binding site for Mn(2+). Glutamate 97 is a Mg(2+) binding site. Mn(2+) contacts are provided by glutamate 124 and glutamate 126. Glutamate 126 is an active-site residue.

The protein belongs to the IPP isomerase type 1 family. Requires Mg(2+) as cofactor. Mn(2+) serves as cofactor.

Its subcellular location is the cytoplasm. It catalyses the reaction isopentenyl diphosphate = dimethylallyl diphosphate. The protein operates within isoprenoid biosynthesis; dimethylallyl diphosphate biosynthesis; dimethylallyl diphosphate from isopentenyl diphosphate: step 1/1. Functionally, catalyzes the 1,3-allylic rearrangement of the homoallylic substrate isopentenyl (IPP) to its highly electrophilic allylic isomer, dimethylallyl diphosphate (DMAPP). The protein is Isopentenyl-diphosphate Delta-isomerase of Frankia alni (strain DSM 45986 / CECT 9034 / ACN14a).